A 521-amino-acid polypeptide reads, in one-letter code: 56 kDa type-specific antigen (521 aa).

Residues 1–22 form the signal peptide; sequence MRKIMLIASAMSALSLPFSANA. A helical membrane pass occupies residues 64–86; that stretch reads LPLIKGMPFGVTLAAGMTITPGV. The tract at residues 386–415 is disordered; it reads LGVDQGQEGGCSKDKKQSDTTAEESKKEGK. A compositionally biased stretch (basic and acidic residues) spans 396 to 415; the sequence is CSKDKKQSDTTAEESKKEGK. Residues 469–484 form a helical membrane-spanning segment; it reads TGMVGSLALGVAANVA.

It is found in the cell membrane. May be an adherent factor for rickettsial adsorption to the host-cell surface and a determinant of virulence of individual rickettsial strain. It is the major outer membrane protein. The protein is 56 kDa type-specific antigen of Orientia tsutsugamushi (Rickettsia tsutsugamushi).